Reading from the N-terminus, the 288-residue chain is Energy-coupling factor transporter ATP-binding protein EcfA2 (288 aa).

The ABC transporter domain occupies 3–246 (IKLEQLGYCY…PDELVDLGLS (244 aa)). Residue 40–47 (GHTGSGKS) coordinates ATP.

It belongs to the ABC transporter superfamily. Energy-coupling factor EcfA family. As to quaternary structure, forms a stable energy-coupling factor (ECF) transporter complex composed of 2 membrane-embedded substrate-binding proteins (S component), 2 ATP-binding proteins (A component) and 2 transmembrane proteins (T component).

It is found in the cell membrane. In terms of biological role, ATP-binding (A) component of a common energy-coupling factor (ECF) ABC-transporter complex. Unlike classic ABC transporters this ECF transporter provides the energy necessary to transport a number of different substrates. The sequence is that of Energy-coupling factor transporter ATP-binding protein EcfA2 from Listeria monocytogenes serotype 4b (strain F2365).